Reading from the N-terminus, the 330-residue chain is DNA-directed RNA polymerase subunit alpha (330 aa).

Positions 1-231 (MQTNLLKPKT…EQLAVFAQLE (231 aa)) are alpha N-terminal domain (alpha-NTD). An alpha C-terminal domain (alpha-CTD) region spans residues 250–330 (FDPILLRPVD…SWPPAGLDKR (81 aa)).

The protein belongs to the RNA polymerase alpha chain family. In terms of assembly, homodimer. The RNAP catalytic core consists of 2 alpha, 1 beta, 1 beta' and 1 omega subunit. When a sigma factor is associated with the core the holoenzyme is formed, which can initiate transcription.

It catalyses the reaction RNA(n) + a ribonucleoside 5'-triphosphate = RNA(n+1) + diphosphate. DNA-dependent RNA polymerase catalyzes the transcription of DNA into RNA using the four ribonucleoside triphosphates as substrates. This chain is DNA-directed RNA polymerase subunit alpha, found in Polaromonas naphthalenivorans (strain CJ2).